The sequence spans 230 residues: Ephrin-A3 (230 aa).

A signal peptide spans 1-22; the sequence is MAAAPLLLLLLLVPVPLLPLLA. Positions 30-161 constitute an Ephrin RBD domain; sequence GNRHAVYWNS…RMKVFVCCAS (132 aa). N-linked (GlcNAc...) asparagine glycans are attached at residues asparagine 38, asparagine 67, asparagine 84, and asparagine 92. 2 cysteine pairs are disulfide-bonded: cysteine 63–cysteine 102 and cysteine 91–cysteine 150. A lipid anchor (GPI-anchor amidated glycine) is attached at glycine 206. The propeptide at 207–230 is removed in mature form; that stretch reads TSPKREHLPLAVGIAFFLMTLLAS.

The protein belongs to the ephrin family. Interacts with EPHA8; activates EPHA8. In terms of tissue distribution, expressed in myogenic progenitor cells.

Its subcellular location is the cell membrane. Cell surface GPI-bound ligand for Eph receptors, a family of receptor tyrosine kinases which are crucial for migration, repulsion and adhesion during neuronal, vascular and epithelial development. Binds promiscuously Eph receptors residing on adjacent cells, leading to contact-dependent bidirectional signaling into neighboring cells. The signaling pathway downstream of the receptor is referred to as forward signaling while the signaling pathway downstream of the ephrin ligand is referred to as reverse signaling. This is Ephrin-A3 (Efna3) from Mus musculus (Mouse).